We begin with the raw amino-acid sequence, 209 residues long: Large ribosomal subunit protein bL9 (209 aa).

The interval 181–209 is disordered; sequence EASEEGQELAAQREATEDAGADESEETEA. The segment covering 197-209 has biased composition (acidic residues); it reads EDAGADESEETEA.

Belongs to the bacterial ribosomal protein bL9 family.

In terms of biological role, binds to the 23S rRNA. The polypeptide is Large ribosomal subunit protein bL9 (Maricaulis maris (strain MCS10) (Caulobacter maris)).